We begin with the raw amino-acid sequence, 124 residues long: Alpha-endosulfine (124 aa).

Serine 74 carries the phosphoserine; by GWL modification. Residues 99–124 (VTGDHIPTPQDLPQRKNTILTSKLAG) form a disordered region. Residues 113–124 (RKNTILTSKLAG) show a composition bias toward polar residues.

The protein belongs to the endosulfine family. In terms of processing, phosphorylation at Ser-74 by gwl during mitosis is essential for interaction with ppp2r2d (PR55-delta) and subsequent inactivation of PP2A.

It is found in the cytoplasm. Functionally, protein phosphatase inhibitor that specifically inhibits protein phosphatase 2A (PP2A) during mitosis. When phosphorylated at Ser-67 during mitosis, specifically interacts with ppp2r2d (PR55-delta) and inhibits its activity, leading to inactivation of PP2A, an essential condition to keep cyclin-B1-CDK1 activity high during M phase. The sequence is that of Alpha-endosulfine (ensa) from Danio rerio (Zebrafish).